Here is a 672-residue protein sequence, read N- to C-terminus: Serine/threonine-protein kinase ppk16 (672 aa).

Positions 31–279 constitute a Protein kinase domain; it reads YRIESVVGEG…IDQIISHPYF (249 aa). Residues 37–45 and Lys-60 contribute to the ATP site; that span reads VGEGSFGKV. The active-site Proton acceptor is the Asp-148. Ser-231 is modified (phosphoserine). Polar residues predominate over residues 375 to 384; sequence VSVMSNNQDS. 4 disordered regions span residues 375 to 396, 416 to 436, 464 to 572, and 632 to 672; these read VSVM…DSSN, DTLS…ENYL, NSFG…YSNV, and SGRK…TDLL. The segment covering 472–487 has biased composition (polar residues); it reads NLPQTTHVDTGEQNTP. Low complexity predominate over residues 508 to 523; sequence SNSQNSPSKSSNLSIN. Positions 531–541 are enriched in polar residues; sequence LQNTVISPQPT. Composition is skewed to low complexity over residues 549-572 and 639-649; these read RSLS…YSNV and SSSSLMFNQSS.

It belongs to the protein kinase superfamily. Ser/Thr protein kinase family.

It is found in the cytoplasm. It catalyses the reaction L-seryl-[protein] + ATP = O-phospho-L-seryl-[protein] + ADP + H(+). The catalysed reaction is L-threonyl-[protein] + ATP = O-phospho-L-threonyl-[protein] + ADP + H(+). Has a role in meiosis. The chain is Serine/threonine-protein kinase ppk16 (ppk16) from Schizosaccharomyces pombe (strain 972 / ATCC 24843) (Fission yeast).